Reading from the N-terminus, the 493-residue chain is Stage V sporulation protein AF (493 aa).

5 consecutive transmembrane segments (helical) span residues 296-316, 334-354, 363-383, 387-407, and 418-438; these read FFGI…VLQP, IPII…RMAA, TAMG…VGLF, VILY…YELS, and MILV…VLII.

It belongs to the GerABKA family.

The protein localises to the cell membrane. The protein is Stage V sporulation protein AF (spoVAF) of Bacillus subtilis (strain 168).